A 66-amino-acid polypeptide reads, in one-letter code: Large ribosomal subunit protein bL35 (66 aa).

Positions 1 to 28 (MPKMKTHRGSAKRFKRTGSGKLKRRHGF) are enriched in basic residues. Residues 1–50 (MPKMKTHRGSAKRFKRTGSGKLKRRHGFTSHMFANKSQKQKRKLRKSAMV) form a disordered region.

It belongs to the bacterial ribosomal protein bL35 family.

In Listeria monocytogenes serotype 4a (strain HCC23), this protein is Large ribosomal subunit protein bL35.